The following is a 314-amino-acid chain: 3'-5' exoribonuclease YhaM (314 aa).

The region spanning 163–279 is the HD domain; that stretch reads HVVSMLDLAK…LHYIDNLDAK (117 aa).

Belongs to the YhaM family.

Shows a 3'-5' exoribonuclease activity. This Bacillus cereus (strain G9842) protein is 3'-5' exoribonuclease YhaM.